Reading from the N-terminus, the 339-residue chain is Ketol-acid reductoisomerase (NADP(+)) (339 aa).

Positions 1 to 182 (MRVYYDRDAD…GGGRSGIIET (182 aa)) constitute a KARI N-terminal Rossmann domain. Residues 24 to 27 (YGSQ), Arg-48, Ser-51, Thr-53, and 83 to 86 (DEHQ) contribute to the NADP(+) site. Residue His-108 is part of the active site. Gly-134 is an NADP(+) binding site. Residues 183-328 (NFREECETDL…ARLRGMMPWI (146 aa)) enclose the KARI C-terminal knotted domain. Mg(2+) contacts are provided by Asp-191, Glu-195, Glu-227, and Glu-231. Position 252 (Ser-252) interacts with substrate.

The protein belongs to the ketol-acid reductoisomerase family. Mg(2+) serves as cofactor.

It carries out the reaction (2R)-2,3-dihydroxy-3-methylbutanoate + NADP(+) = (2S)-2-acetolactate + NADPH + H(+). It catalyses the reaction (2R,3R)-2,3-dihydroxy-3-methylpentanoate + NADP(+) = (S)-2-ethyl-2-hydroxy-3-oxobutanoate + NADPH + H(+). It functions in the pathway amino-acid biosynthesis; L-isoleucine biosynthesis; L-isoleucine from 2-oxobutanoate: step 2/4. It participates in amino-acid biosynthesis; L-valine biosynthesis; L-valine from pyruvate: step 2/4. Functionally, involved in the biosynthesis of branched-chain amino acids (BCAA). Catalyzes an alkyl-migration followed by a ketol-acid reduction of (S)-2-acetolactate (S2AL) to yield (R)-2,3-dihydroxy-isovalerate. In the isomerase reaction, S2AL is rearranged via a Mg-dependent methyl migration to produce 3-hydroxy-3-methyl-2-ketobutyrate (HMKB). In the reductase reaction, this 2-ketoacid undergoes a metal-dependent reduction by NADPH to yield (R)-2,3-dihydroxy-isovalerate. This Caulobacter sp. (strain K31) protein is Ketol-acid reductoisomerase (NADP(+)).